The following is a 453-amino-acid chain: Indoleamine 2,3-dioxygenase (453 aa).

His-331 contacts heme.

This sequence belongs to the indoleamine 2,3-dioxygenase family. The cofactor is heme.

The catalysed reaction is D-tryptophan + O2 = N-formyl-D-kynurenine. The enzyme catalyses L-tryptophan + O2 = N-formyl-L-kynurenine. It participates in cofactor biosynthesis; NAD(+) biosynthesis. Catalyzes the first step in tryptophan catabolism in order to supply de novo nicotinamide adenine dinucleotide (NAD(+)) via the kynurenine pathway. Plays a role in the cellular response to telomere uncapping. The polypeptide is Indoleamine 2,3-dioxygenase (BNA2) (Saccharomyces cerevisiae (strain ATCC 204508 / S288c) (Baker's yeast)).